The primary structure comprises 274 residues: Cytochrome b-c1 complex subunit Rieske, mitochondrial (274 aa).

Over 79 to 103 the chain is Mitochondrial matrix; it reads SHTDIKVPDFSEYRRLEVLDSTKSS. A helical membrane pass occupies residues 104–140; sequence RESSEARKGFSYLVTGVTTVGVAYAAKNAVTQFVSSM. Residues 141–274 lie on the Mitochondrial intermembrane side of the membrane; sequence SASADVLALA…FTSDDMVIVG (134 aa). Residues 187-272 form the Rieske domain; it reads EAAVELSQLR…YEFTSDDMVI (86 aa). Residues Cys217, His219, Cys236, His239, and Ser241 each coordinate [2Fe-2S] cluster. Cys222 and Cys238 form a disulfide bridge.

It belongs to the Rieske iron-sulfur protein family. Component of the ubiquinol-cytochrome c oxidoreductase (cytochrome b-c1 complex, complex III, CIII), a multisubunit enzyme composed of 11 subunits. The complex is composed of 3 respiratory subunits cytochrome b, cytochrome c1 and Rieske protein UQCRFS1, 2 core protein subunits UQCRC1/QCR1 and UQCRC2/QCR2, and 6 low-molecular weight protein subunits UQCRH/QCR6, UQCRB/QCR7, UQCRQ/QCR8, UQCR10/QCR9, UQCR11/QCR10 and subunit 9, the cleavage product of Rieske protein UQCRFS1. The complex exists as an obligatory dimer and forms supercomplexes (SCs) in the inner mitochondrial membrane with NADH-ubiquinone oxidoreductase (complex I, CI) and cytochrome c oxidase (complex IV, CIV), resulting in different assemblies (supercomplex SCI(1)III(2)IV(1) and megacomplex MCI(2)III(2)IV(2)). Incorporation of the Rieske protein UQCRFS1 is the penultimate step in complex III assembly. Interacts with TTC19, which is involved in the clearance of UQCRFS1 fragments. In terms of assembly, component of the ubiquinol-cytochrome c oxidoreductase (cytochrome b-c1 complex, complex III, CIII). Subunit 9 corresponds to the mitochondrial targeting sequence (MTS) of Rieske protein UQCRFS1. It is retained after processing and incorporated inside complex III, where it remains bound to the complex and localizes between the 2 core subunits UQCRC1/QCR1 and UQCRC2/QCR2. It depends on [2Fe-2S] cluster as a cofactor. Post-translationally, proteolytic processing is necessary for the correct insertion of UQCRFS1 in the complex III dimer. Several fragments are generated during UQCRFS1 insertion, most probably due to the endogenous matrix-processing peptidase (MPP) activity of the 2 core protein subunits UQCRC1/QCR1 and UQCRC2/QCR2, which are homologous to the 2 mitochondrial-processing peptidase (MPP) subunits beta-MPP and alpha-MPP respectively. The action of the protease is also necessary for the clearance of the UQCRFS1 fragments.

It localises to the mitochondrion inner membrane. It carries out the reaction a quinol + 2 Fe(III)-[cytochrome c](out) = a quinone + 2 Fe(II)-[cytochrome c](out) + 2 H(+)(out). In terms of biological role, component of the ubiquinol-cytochrome c oxidoreductase, a multisubunit transmembrane complex that is part of the mitochondrial electron transport chain which drives oxidative phosphorylation. The respiratory chain contains 3 multisubunit complexes succinate dehydrogenase (complex II, CII), ubiquinol-cytochrome c oxidoreductase (cytochrome b-c1 complex, complex III, CIII) and cytochrome c oxidase (complex IV, CIV), that cooperate to transfer electrons derived from NADH and succinate to molecular oxygen, creating an electrochemical gradient over the inner membrane that drives transmembrane transport and the ATP synthase. The cytochrome b-c1 complex catalyzes electron transfer from ubiquinol to cytochrome c, linking this redox reaction to translocation of protons across the mitochondrial inner membrane, with protons being carried across the membrane as hydrogens on the quinol. In the process called Q cycle, 2 protons are consumed from the matrix, 4 protons are released into the intermembrane space and 2 electrons are passed to cytochrome c. The Rieske protein is a catalytic core subunit containing a [2Fe-2S] iron-sulfur cluster. It cycles between 2 conformational states during catalysis to transfer electrons from the quinol bound in the Q(0) site in cytochrome b to cytochrome c1. Incorporation of UQCRFS1 is the penultimate step in complex III assembly. Component of the ubiquinol-cytochrome c oxidoreductase (cytochrome b-c1 complex, complex III, CIII). UQCRFS1 undergoes proteolytic processing once it is incorporated in the complex III dimer. One of the fragments, called subunit 9, corresponds to its mitochondrial targeting sequence (MTS). The proteolytic processing is necessary for the correct insertion of UQCRFS1 in the complex III dimer, but the persistence of UQCRFS1-derived fragments may prevent newly imported UQCRFS1 to be processed and assembled into complex III and is detrimental for the complex III structure and function. The chain is Cytochrome b-c1 complex subunit Rieske, mitochondrial (UQCRFS1) from Gorilla gorilla gorilla (Western lowland gorilla).